Reading from the N-terminus, the 299-residue chain is Phosphatidylserine decarboxylase proenzyme (299 aa).

Catalysis depends on charge relay system; for autoendoproteolytic cleavage activity residues Asp115, His171, and Ser258. Ser258 acts as the Schiff-base intermediate with substrate; via pyruvic acid; for decarboxylase activity in catalysis. Ser258 bears the Pyruvic acid (Ser); by autocatalysis mark.

It belongs to the phosphatidylserine decarboxylase family. PSD-B subfamily. Prokaryotic type II sub-subfamily. As to quaternary structure, heterodimer of a large membrane-associated beta subunit and a small pyruvoyl-containing alpha subunit. Pyruvate serves as cofactor. Post-translationally, is synthesized initially as an inactive proenzyme. Formation of the active enzyme involves a self-maturation process in which the active site pyruvoyl group is generated from an internal serine residue via an autocatalytic post-translational modification. Two non-identical subunits are generated from the proenzyme in this reaction, and the pyruvate is formed at the N-terminus of the alpha chain, which is derived from the carboxyl end of the proenzyme. The autoendoproteolytic cleavage occurs by a canonical serine protease mechanism, in which the side chain hydroxyl group of the serine supplies its oxygen atom to form the C-terminus of the beta chain, while the remainder of the serine residue undergoes an oxidative deamination to produce ammonia and the pyruvoyl prosthetic group on the alpha chain. During this reaction, the Ser that is part of the protease active site of the proenzyme becomes the pyruvoyl prosthetic group, which constitutes an essential element of the active site of the mature decarboxylase.

The protein resides in the cell membrane. It catalyses the reaction a 1,2-diacyl-sn-glycero-3-phospho-L-serine + H(+) = a 1,2-diacyl-sn-glycero-3-phosphoethanolamine + CO2. It participates in phospholipid metabolism; phosphatidylethanolamine biosynthesis; phosphatidylethanolamine from CDP-diacylglycerol: step 2/2. Catalyzes the formation of phosphatidylethanolamine (PtdEtn) from phosphatidylserine (PtdSer). This Chlamydia caviae (strain ATCC VR-813 / DSM 19441 / 03DC25 / GPIC) (Chlamydophila caviae) protein is Phosphatidylserine decarboxylase proenzyme.